Reading from the N-terminus, the 130-residue chain is Small ribosomal subunit protein uS8 (130 aa).

It belongs to the universal ribosomal protein uS8 family. Part of the 30S ribosomal subunit. Contacts proteins S5 and S12.

Its function is as follows. One of the primary rRNA binding proteins, it binds directly to 16S rRNA central domain where it helps coordinate assembly of the platform of the 30S subunit. The polypeptide is Small ribosomal subunit protein uS8 (Vibrio campbellii (strain ATCC BAA-1116)).